The following is an 83-amino-acid chain: Small ribosomal subunit protein bS18 (83 aa).

Belongs to the bacterial ribosomal protein bS18 family. Part of the 30S ribosomal subunit. Forms a tight heterodimer with protein bS6.

Functionally, binds as a heterodimer with protein bS6 to the central domain of the 16S rRNA, where it helps stabilize the platform of the 30S subunit. This is Small ribosomal subunit protein bS18 from Tropheryma whipplei (strain TW08/27) (Whipple's bacillus).